Here is a 276-residue protein sequence, read N- to C-terminus: MADLQTEIEAAWEARADISAATTGPVRTAVDEALRLLDSGEARVAEKIDGEWFTHQWLKKAVLLSFRLNPNTVMRSGALGGGVGPWWDKVPNKFDGWDAPQFEAGGFRAVPGAIVRRGAHIGKNVILMPSFVNIGGYVDEGTMVDTWVTVGSCAQIGKNVHLSGGVGIGGVLEPLQANPTIIEDNCFIGARSEVVEGVVVGEGSVLSMGVFISASTKIVDRKTGAVHIGKVPPYSVVVPGNLPDPNGGPGLYCAVIVKTVDAQTRSKTSINDLLRD.

Substrate-binding residues include Arg108 and Asp145.

The protein belongs to the transferase hexapeptide repeat family. In terms of assembly, homotrimer.

It localises to the cytoplasm. It catalyses the reaction (S)-2,3,4,5-tetrahydrodipicolinate + succinyl-CoA + H2O = (S)-2-succinylamino-6-oxoheptanedioate + CoA. The protein operates within amino-acid biosynthesis; L-lysine biosynthesis via DAP pathway; LL-2,6-diaminopimelate from (S)-tetrahydrodipicolinate (succinylase route): step 1/3. This is 2,3,4,5-tetrahydropyridine-2,6-dicarboxylate N-succinyltransferase from Caulobacter vibrioides (strain ATCC 19089 / CIP 103742 / CB 15) (Caulobacter crescentus).